Here is a 305-residue protein sequence, read N- to C-terminus: Oxygen-dependent coproporphyrinogen-III oxidase (305 aa).

Serine 97 provides a ligand contact to substrate. The a divalent metal cation site is built by histidine 101 and histidine 111. The active-site Proton donor is the histidine 111. Residue 113 to 115 (NVR) coordinates substrate. Histidine 150 and histidine 180 together coordinate a divalent metal cation. Residues 245–280 (YVEFNLVWDRGTHFGLQSGGRTESILLSMPPLASWA) form an important for dimerization region. A substrate-binding site is contributed by 263–265 (GGR).

The protein belongs to the aerobic coproporphyrinogen-III oxidase family. As to quaternary structure, homodimer. A divalent metal cation is required as a cofactor.

It is found in the cytoplasm. The enzyme catalyses coproporphyrinogen III + O2 + 2 H(+) = protoporphyrinogen IX + 2 CO2 + 2 H2O. It functions in the pathway porphyrin-containing compound metabolism; protoporphyrin-IX biosynthesis; protoporphyrinogen-IX from coproporphyrinogen-III (O2 route): step 1/1. Its function is as follows. Involved in the heme biosynthesis. Catalyzes the aerobic oxidative decarboxylation of propionate groups of rings A and B of coproporphyrinogen-III to yield the vinyl groups in protoporphyrinogen-IX. The chain is Oxygen-dependent coproporphyrinogen-III oxidase from Variovorax paradoxus (strain S110).